We begin with the raw amino-acid sequence, 344 residues long: Acireductone dioxygenase (344 aa).

Positions 92, 94, 98, and 137 each coordinate Fe(2+). His92, His94, Glu98, and His137 together coordinate Ni(2+).

It belongs to the acireductone dioxygenase (ARD) family. Fe(2+) is required as a cofactor. It depends on Ni(2+) as a cofactor.

The protein localises to the cytoplasm. Its subcellular location is the nucleus. It carries out the reaction 1,2-dihydroxy-5-(methylsulfanyl)pent-1-en-3-one + O2 = 4-methylsulfanyl-2-oxobutanoate + formate + 2 H(+). The enzyme catalyses 1,2-dihydroxy-5-(methylsulfanyl)pent-1-en-3-one + O2 = 3-(methylsulfanyl)propanoate + CO + formate + 2 H(+). It participates in amino-acid biosynthesis; L-methionine biosynthesis via salvage pathway; L-methionine from S-methyl-5-thio-alpha-D-ribose 1-phosphate: step 5/6. Catalyzes 2 different reactions between oxygen and the acireductone 1,2-dihydroxy-3-keto-5-methylthiopentene (DHK-MTPene) depending upon the metal bound in the active site. Fe-containing acireductone dioxygenase (Fe-ARD) produces formate and 2-keto-4-methylthiobutyrate (KMTB), the alpha-ketoacid precursor of methionine in the methionine recycle pathway. Ni-containing acireductone dioxygenase (Ni-ARD) produces methylthiopropionate, carbon monoxide and formate, and does not lie on the methionine recycle pathway. The sequence is that of Acireductone dioxygenase from Leishmania braziliensis.